We begin with the raw amino-acid sequence, 203 residues long: Ribosomal RNA large subunit methyltransferase E (203 aa).

5 residues coordinate S-adenosyl-L-methionine: Gly-51, Trp-53, Asp-69, Asp-85, and Asp-108. Lys-148 serves as the catalytic Proton acceptor.

This sequence belongs to the class I-like SAM-binding methyltransferase superfamily. RNA methyltransferase RlmE family.

Its subcellular location is the cytoplasm. The enzyme catalyses uridine(2552) in 23S rRNA + S-adenosyl-L-methionine = 2'-O-methyluridine(2552) in 23S rRNA + S-adenosyl-L-homocysteine + H(+). Specifically methylates the uridine in position 2552 of 23S rRNA at the 2'-O position of the ribose in the fully assembled 50S ribosomal subunit. The polypeptide is Ribosomal RNA large subunit methyltransferase E (Methanocorpusculum labreanum (strain ATCC 43576 / DSM 4855 / Z)).